Reading from the N-terminus, the 373-residue chain is Indole glucosinolate O-methyltransferase 2 (373 aa).

The S-adenosyl-L-homocysteine site is built by glycine 217, aspartate 240, aspartate 260, methionine 261, and lysine 274. Histidine 278 functions as the Proton acceptor in the catalytic mechanism.

The protein belongs to the class I-like SAM-binding methyltransferase superfamily. Cation-independent O-methyltransferase family.

It functions in the pathway secondary metabolite biosynthesis. Functionally, involved in indole glucosinolate biosynthesis. Catalyzes methoxylation reactions of the glucosinolate indole ring. Converts the hydroxy intermediates 4-hydroxy-indol-3-yl-methylglucosinolate (4OH-I3M) and 1-hydroxy-indol-3-yl-methylglucosinolate (1OH-I3M) to 4-methoxy-indol-3-yl-methylglucosinolate (4MO-I3M) and 1-methoxy-indol-3-yl-methylglucosinolate (1MO-I3M), respectively. The protein is Indole glucosinolate O-methyltransferase 2 of Arabidopsis thaliana (Mouse-ear cress).